The sequence spans 74 residues: Translation initiation factor IF-1 (74 aa).

In terms of domain architecture, S1-like spans 1–72 (MGKEDVIRME…TRGRIVYRKK (72 aa)).

This sequence belongs to the IF-1 family. In terms of assembly, component of the 30S ribosomal translation pre-initiation complex which assembles on the 30S ribosome in the order IF-2 and IF-3, IF-1 and N-formylmethionyl-tRNA(fMet); mRNA recruitment can occur at any time during PIC assembly.

Its subcellular location is the cytoplasm. One of the essential components for the initiation of protein synthesis. Stabilizes the binding of IF-2 and IF-3 on the 30S subunit to which N-formylmethionyl-tRNA(fMet) subsequently binds. Helps modulate mRNA selection, yielding the 30S pre-initiation complex (PIC). Upon addition of the 50S ribosomal subunit IF-1, IF-2 and IF-3 are released leaving the mature 70S translation initiation complex. This chain is Translation initiation factor IF-1, found in Thermotoga maritima (strain ATCC 43589 / DSM 3109 / JCM 10099 / NBRC 100826 / MSB8).